A 504-amino-acid polypeptide reads, in one-letter code: Glucan endo-1,3-beta-glucosidase 7 (504 aa).

Positions 1 to 22 (MALSISIYFLLIFLSHFPSSHA) are cleaved as a signal peptide. The active-site Proton donor is the glutamate 119. The active-site Nucleophile is glutamate 264. The cysteines at positions 365 and 427 are disulfide-linked.

This sequence belongs to the glycosyl hydrolase 17 family. In terms of processing, contains two additional disulfide bonds.

Its subcellular location is the secreted. It is found in the cell wall. The catalysed reaction is Hydrolysis of (1-&gt;3)-beta-D-glucosidic linkages in (1-&gt;3)-beta-D-glucans.. The chain is Glucan endo-1,3-beta-glucosidase 7 from Arabidopsis thaliana (Mouse-ear cress).